The chain runs to 367 residues: Inactive serine protease 39 (367 aa).

The first 31 residues, 1-31 (MWGSRAQQSGPDRGGACLLAAFLLCFSLLHA), serve as a signal peptide directing secretion. A Peptidase S1 domain is found at 68–312 (IYGGQIAKAE…FSDWIKQKKA (245 aa)). 4 disulfides stabilise this stretch: cysteine 93-cysteine 109, cysteine 192-cysteine 269, cysteine 225-cysteine 248, and cysteine 259-cysteine 287.

This sequence belongs to the peptidase S1 family. Expressed in testis. More specifically, abundantly expressed in the haploid round spermatid.

The protein resides in the cytoplasmic vesicle. It is found in the secretory vesicle. Its subcellular location is the acrosome. It localises to the secreted. Functionally, may play an important role in the sperm/egg interaction; released during the acrosome reaction. This is Inactive serine protease 39 (Prss39) from Mus musculus (Mouse).